The chain runs to 114 residues: Transcription initiation factor IIA subunit 2 (114 aa).

It belongs to the TFIIA subunit 2 family. As to quaternary structure, TFIIA is a heterodimer composed of the large toa1 and the small toa2 subunits.

It is found in the nucleus. In terms of biological role, TFIIA is a component of the transcription machinery of RNA polymerase II and plays an important role in transcriptional activation. TFIIA in a complex with tbp mediates transcriptional activity. This is Transcription initiation factor IIA subunit 2 (toa2) from Fusarium vanettenii (strain ATCC MYA-4622 / CBS 123669 / FGSC 9596 / NRRL 45880 / 77-13-4) (Fusarium solani subsp. pisi).